A 133-amino-acid chain; its full sequence is Large ribosomal subunit protein bL20 (133 aa).

Belongs to the bacterial ribosomal protein bL20 family.

Binds directly to 23S ribosomal RNA and is necessary for the in vitro assembly process of the 50S ribosomal subunit. It is not involved in the protein synthesizing functions of that subunit. In Bartonella quintana (strain Toulouse) (Rochalimaea quintana), this protein is Large ribosomal subunit protein bL20.